We begin with the raw amino-acid sequence, 219 residues long: Carbonic anhydrase 1 (219 aa).

Residues cysteine 39, aspartate 41, histidine 98, and cysteine 101 each coordinate Zn(2+).

This sequence belongs to the beta-class carbonic anhydrase family. Oligomer. It depends on Zn(2+) as a cofactor.

The catalysed reaction is hydrogencarbonate + H(+) = CO2 + H2O. Reversible hydration of carbon dioxide. Carbon dioxide formed in the bicarbonate-dependent decomposition of cyanate by cyanase (CynS) diffuses out of the cell faster than it would be hydrated to bicarbonate, so the apparent function of this enzyme is to catalyze the hydration of carbon dioxide and thus prevent depletion of cellular bicarbonate. The chain is Carbonic anhydrase 1 (cynT) from Escherichia coli O157:H7.